Consider the following 193-residue polypeptide: dTTP/UTP pyrophosphatase (193 aa).

Asp71 functions as the Proton acceptor in the catalytic mechanism.

It belongs to the Maf family. YhdE subfamily. It depends on a divalent metal cation as a cofactor.

It localises to the cytoplasm. The enzyme catalyses dTTP + H2O = dTMP + diphosphate + H(+). The catalysed reaction is UTP + H2O = UMP + diphosphate + H(+). Nucleoside triphosphate pyrophosphatase that hydrolyzes dTTP and UTP. May have a dual role in cell division arrest and in preventing the incorporation of modified nucleotides into cellular nucleic acids. The sequence is that of dTTP/UTP pyrophosphatase from Geobacter sp. (strain M21).